A 422-amino-acid polypeptide reads, in one-letter code: N-acylglucosamine 2-epimerase (422 aa).

Positions 185–206 (LLNLVEQLGEADEELAGISAEL) are leucine-zipper.

It belongs to the N-acylglucosamine 2-epimerase family. As to quaternary structure, homodimer. Forms a heterodimer with renin and inhibits its activity.

It catalyses the reaction an N-acyl-D-glucosamine = an N-acyl-D-mannosamine. It functions in the pathway amino-sugar metabolism; N-acetylneuraminate degradation. In terms of biological role, catalyzes the interconversion of N-acetylglucosamine to N-acetylmannosamine. Involved in the N-glycolylneuraminic acid (Neu5Gc) degradation pathway. The chain is N-acylglucosamine 2-epimerase (RENBP) from Bos taurus (Bovine).